The following is a 988-amino-acid chain: UPF0182 protein MAB_3498c (988 aa).

The next 7 helical transmembrane spans lie at 19 to 39, 63 to 83, 114 to 134, 176 to 196, 211 to 231, 260 to 280, and 288 to 308; these read LVAA…LVDT, LALF…GFGL, LFLI…AQSY, FIAA…FGGI, IQLI…YWLD, KLIL…ALVL, and IGLA…PLIV.

This sequence belongs to the UPF0182 family.

Its subcellular location is the cell membrane. This chain is UPF0182 protein MAB_3498c, found in Mycobacteroides abscessus (strain ATCC 19977 / DSM 44196 / CCUG 20993 / CIP 104536 / JCM 13569 / NCTC 13031 / TMC 1543 / L948) (Mycobacterium abscessus).